The sequence spans 266 residues: Putative transmembrane ascorbate-dependent reductase CYB561 homolog (266 aa).

Topologically, residues 1 to 22 (MSLLFDPGFVILREDQSVKLFN) are cytoplasmic. A helical transmembrane segment spans residues 23–43 (IILVMSQVFGGLAVLLVTIWM). The 214-residue stretch at 27–240 (MSQVFGGLAV…YTVCVLLLVL (214 aa)) folds into the Cytochrome b561 domain. Over 44–61 (SKFESGFAWNEDPDKEFN) the chain is Vesicular. Residues 62–82 (YHPTFMIMGMVFLFGEALLVY) traverse the membrane as a helical segment. Heme b contacts are provided by H63, R83, and K90. The Cytoplasmic portion of the chain corresponds to 83 to 95 (RVFRNERKKFSKT). K90 and K94 together coordinate L-ascorbate. Residues 96 to 116 (LHVILHSCVLVFMLMALKAVF) traverse the membrane as a helical segment. Residues H97, 134–137 (NLVS), and H139 contribute to the heme b site. Over 117–141 (DYHNLHKDPSGNPAPIVNLVSLHSW) the chain is Vesicular. A helical membrane pass occupies residues 142–162 (IGLSVVILYFAQYIVGFITYF). Residues 163–176 (FPGMPIPIRQLVMP) are Cytoplasmic-facing. R171 is a binding site for L-ascorbate. Residues 177–197 (FHQMFGVLIFIFVSITVAMGI) form a helical membrane-spanning segment. H178 and E199 together coordinate heme b. At 198–219 (SERAAWKHTCWTKEGQMCAQQA) the chain is on the vesicular side. The helical transmembrane segment at 220–240 (TSSFVGVFTFLYTVCVLLLVL) threads the bilayer. Residues 241–266 (NPRWKRQSLPEEEGLHHLTSSHSMSD) are Cytoplasmic-facing. K245 contacts heme b.

Heme b is required as a cofactor.

It localises to the membrane. It carries out the reaction monodehydro-L-ascorbate radical(out) + L-ascorbate(in) = monodehydro-L-ascorbate radical(in) + L-ascorbate(out). Functionally, putative transmembrane reductase that uses ascorbate as an electron donor in the cytoplasm and transfers electrons across membranes to reduce monodehydro-L-ascorbate radical in the lumen of secretory vesicles. The polypeptide is Putative transmembrane ascorbate-dependent reductase CYB561 homolog (Caenorhabditis elegans).